We begin with the raw amino-acid sequence, 88 residues long: ATP synthase F(0) complex subunit f, mitochondrial (88 aa).

At Ala-2 the chain carries N-acetylalanine. Ser-3 is subject to Phosphoserine. At Lys-16 the chain carries N6-acetyllysine. The helical transmembrane segment at 62 to 79 (MVLAAYVVFNYCRSYKEL) threads the bilayer.

This sequence belongs to the ATPase F chain family. In terms of assembly, component of the ATP synthase complex composed at least of ATP5F1A/subunit alpha, ATP5F1B/subunit beta, ATP5MC1/subunit c (homooctomer), MT-ATP6/subunit a, MT-ATP8/subunit 8, ATP5ME/subunit e, ATP5MF/subunit f, ATP5MG/subunit g, ATP5MK/subunit k, ATP5MJ/subunit j, ATP5F1C/subunit gamma, ATP5F1D/subunit delta, ATP5F1E/subunit epsilon, ATP5PF/subunit F6, ATP5PB/subunit b, ATP5PD/subunit d, ATP5PO/subunit OSCP. ATP synthase complex consists of a soluble F(1) head domain (subunits alpha(3) and beta(3)) - the catalytic core - and a membrane F(0) domain - the membrane proton channel (subunits c, a, 8, e, f, g, k and j). These two domains are linked by a central stalk (subunits gamma, delta, and epsilon) rotating inside the F1 region and a stationary peripheral stalk (subunits F6, b, d, and OSCP).

The protein resides in the mitochondrion. Its subcellular location is the mitochondrion inner membrane. Its function is as follows. Subunit f, of the mitochondrial membrane ATP synthase complex (F(1)F(0) ATP synthase or Complex V) that produces ATP from ADP in the presence of a proton gradient across the membrane which is generated by electron transport complexes of the respiratory chain. ATP synthase complex consist of a soluble F(1) head domain - the catalytic core - and a membrane F(1) domain - the membrane proton channel. These two domains are linked by a central stalk rotating inside the F(1) region and a stationary peripheral stalk. During catalysis, ATP synthesis in the catalytic domain of F(1) is coupled via a rotary mechanism of the central stalk subunits to proton translocation. In vivo, can only synthesize ATP although its ATP hydrolase activity can be activated artificially in vitro. Part of the complex F(0) domain. In Sus scrofa (Pig), this protein is ATP synthase F(0) complex subunit f, mitochondrial.